A 361-amino-acid chain; its full sequence is Phospho-N-acetylmuramoyl-pentapeptide-transferase (361 aa).

11 helical membrane passes run 10–30, 40–60, 84–104, 107–127, 147–167, 175–195, 206–226, 232–252, 260–280, 288–308, and 341–361; these read PGTG…ACLI, LSLP…IGVP, GTPT…GSLV, GDPR…IGGI, LLLQ…HGAI, WGWL…VFLA, LDGL…LQLM, GDPA…GFLL, VFMG…IALL, LLMG…VWVF, and VVVS…VLVP.

This sequence belongs to the glycosyltransferase 4 family. MraY subfamily. It depends on Mg(2+) as a cofactor.

Its subcellular location is the cell inner membrane. It catalyses the reaction UDP-N-acetyl-alpha-D-muramoyl-L-alanyl-gamma-D-glutamyl-meso-2,6-diaminopimeloyl-D-alanyl-D-alanine + di-trans,octa-cis-undecaprenyl phosphate = di-trans,octa-cis-undecaprenyl diphospho-N-acetyl-alpha-D-muramoyl-L-alanyl-D-glutamyl-meso-2,6-diaminopimeloyl-D-alanyl-D-alanine + UMP. The protein operates within cell wall biogenesis; peptidoglycan biosynthesis. In terms of biological role, catalyzes the initial step of the lipid cycle reactions in the biosynthesis of the cell wall peptidoglycan: transfers peptidoglycan precursor phospho-MurNAc-pentapeptide from UDP-MurNAc-pentapeptide onto the lipid carrier undecaprenyl phosphate, yielding undecaprenyl-pyrophosphoryl-MurNAc-pentapeptide, known as lipid I. This is Phospho-N-acetylmuramoyl-pentapeptide-transferase from Synechococcus sp. (strain RCC307).